Here is a 355-residue protein sequence, read N- to C-terminus: MDDNKKRALAAALGQIERQFGKGAVMRMGDHERQGIPAISTGSLGLDIALGIGGLPKGRIVEIYGPESSGKTTLTLSVIAEAQKNGATCAFVDAEHALDPEYAGKLGVNVDDLLVSQPDTGEQALEITDMLVRSNAVDVIIVDSVAALVPKAEIEGEMGDMHVGLQARLMSQALRKITGNIKNANCLVIFINQIRMKIGVMFGSPETTTGGNALKFYASVRLDIRRTGAVKEGDEVVGSETRVKIVKNKVSPPFRQAEFQILYGKGIYRNGEIIDLGVSQGLVEKSGAWYAYQGNKIGQGKANAAKYLAENPAIGAEIEKQIREKLLKAGAAAEAGKAAAAEADADDMADADAGY.

65–72 (GPESSGKT) contributes to the ATP binding site.

This sequence belongs to the RecA family.

It is found in the cytoplasm. Functionally, can catalyze the hydrolysis of ATP in the presence of single-stranded DNA, the ATP-dependent uptake of single-stranded DNA by duplex DNA, and the ATP-dependent hybridization of homologous single-stranded DNAs. It interacts with LexA causing its activation and leading to its autocatalytic cleavage. The polypeptide is Protein RecA (Pseudomonas putida (strain ATCC 47054 / DSM 6125 / CFBP 8728 / NCIMB 11950 / KT2440)).